Reading from the N-terminus, the 132-residue chain is MEPISHVVKSSLPNYLSSLPIPDSFGGWFKLSFKDWLALIPPTVVVAGLGYTTYLAFCPAARCAGKDSGRCNSSIRKNEAKVVTMVDVEDIAGQAAFCRCWKTKNWPYCDGSHGEHNKQTGDNVGPVVVKKK.

The Lumenal portion of the chain corresponds to 1–35 (MEPISHVVKSSLPNYLSSLPIPDSFGGWFKLSFKD). A helical transmembrane segment spans residues 36 to 58 (WLALIPPTVVVAGLGYTTYLAFC). Over 59–132 (PAARCAGKDS…NVGPVVVKKK (74 aa)) the chain is Cytoplasmic. Cysteine 98, cysteine 100, cysteine 109, and histidine 113 together coordinate [2Fe-2S] cluster.

The protein belongs to the CISD protein family. CISD2 subfamily. [2Fe-2S] cluster is required as a cofactor.

It localises to the endoplasmic reticulum membrane. This chain is CDGSH iron-sulfur domain-containing protein 2 homolog, found in Drosophila persimilis (Fruit fly).